A 345-amino-acid chain; its full sequence is Myb/SANT-like DNA-binding domain-containing protein 4 (345 aa).

One can recognise a Myb-like domain in the interval 4-77 (LKRKRKSNFS…EVKRRYLDWR (74 aa)). A Glycyl lysine isopeptide (Lys-Gly) (interchain with G-Cter in SUMO2) cross-link involves residue lysine 9. Serine 106 carries the post-translational modification Phosphoserine. Residues lysine 114 and lysine 142 each participate in a glycyl lysine isopeptide (Lys-Gly) (interchain with G-Cter in SUMO2) cross-link. The disordered stretch occupies residues 139–175 (TEVKVEEEERDPQSPEFEIEEEEEMLSSVIPDSRREN). Threonine 188 is subject to Phosphothreonine. Residues 202 to 344 (HLLMNIEKQK…RLRIQKEGHL (143 aa)) are a coiled coil. Residues lysine 237, lysine 254, and lysine 273 each participate in a glycyl lysine isopeptide (Lys-Gly) (interchain with G-Cter in SUMO2) cross-link.

The sequence is that of Myb/SANT-like DNA-binding domain-containing protein 4 (Msantd4) from Mus musculus (Mouse).